Reading from the N-terminus, the 456-residue chain is tRNA modification GTPase MnmE (456 aa).

3 residues coordinate (6S)-5-formyl-5,6,7,8-tetrahydrofolate: Arg-21, Glu-85, and Lys-124. Residues Gln-220–Gly-379 enclose the TrmE-type G domain. Asn-230 is a binding site for K(+). GTP is bound by residues Asn-230–Ser-235, Ser-249–Thr-255, and Asp-274–Gly-277. Ser-234 contacts Mg(2+). Ser-249, Ile-251, and Thr-254 together coordinate K(+). Thr-255 serves as a coordination point for Mg(2+). (6S)-5-formyl-5,6,7,8-tetrahydrofolate is bound at residue Lys-456.

This sequence belongs to the TRAFAC class TrmE-Era-EngA-EngB-Septin-like GTPase superfamily. TrmE GTPase family. In terms of assembly, homodimer. Heterotetramer of two MnmE and two MnmG subunits. It depends on K(+) as a cofactor.

Its subcellular location is the cytoplasm. Its function is as follows. Exhibits a very high intrinsic GTPase hydrolysis rate. Involved in the addition of a carboxymethylaminomethyl (cmnm) group at the wobble position (U34) of certain tRNAs, forming tRNA-cmnm(5)s(2)U34. The polypeptide is tRNA modification GTPase MnmE (Leptospira interrogans serogroup Icterohaemorrhagiae serovar copenhageni (strain Fiocruz L1-130)).